Here is a 472-residue protein sequence, read N- to C-terminus: Inhibitor of Apoptosis OPG037 (472 aa).

ANK repeat units lie at residues 97–126 (DGNY…DPNA), 130–161 (HNKT…KINN), 233–263 (DGNT…DVNK), 267–297 (FGDS…VITD), 322–351 (YDST…ICED), and 353–377 (MYYA…SVDF).

Belongs to the orthopoxvirus OPG037 protein family. In terms of assembly, may interact with host caspase-9-Apaf-1 complex.

It localises to the host cytoplasm. In terms of biological role, inhibits host apoptosis. Acts by associating with host apoptosome. This Vaccinia virus (strain Western Reserve) (VACV) protein is Inhibitor of Apoptosis OPG037 (OPG037).